A 339-amino-acid chain; its full sequence is Vomeronasal type-1 receptor A14 (339 aa).

The Extracellular portion of the chain corresponds to 1–42; the sequence is MMGVQICQGMMSEIPFFSPPPQFSYMMNKNIRLHTDSNIRNT. A helical transmembrane segment spans residues 43-63; the sequence is FFTDIGIGISANSLLLLFNIF. The Cytoplasmic portion of the chain corresponds to 64–75; the sequence is KLTRGQRSRLTD. The helical transmembrane segment at 76–96 threads the bilayer; that stretch reads LPIGLLSLINLLMLLMAAFIA. Over 97 to 119 the chain is Extracellular; that stretch reads TDTFISWKGWDDIICKFLVYLYR. Cysteines 111 and 198 form a disulfide. The helical transmembrane segment at 120-140 threads the bilayer; that stretch reads TFRGLSLCTSCLLSVLQAIIL. The Cytoplasmic portion of the chain corresponds to 141–160; the sequence is SPRSSCLAKFKHKPPHHISC. A helical membrane pass occupies residues 161–181; the sequence is AILSLSVLYMFIGSHLLVSII. At 182–213 the chain is on the extracellular side; the sequence is ATPNLTTNDFIHVTQSCSILPMSYLMQCMFST. An N-linked (GlcNAc...) asparagine glycan is attached at Asn-185. Residues 214–234 traverse the membrane as a helical segment; that stretch reads LLAIRDVFLISLMVLSTWYMV. The Cytoplasmic portion of the chain corresponds to 235-264; it reads ALLCRHRKQTRHLQGTSLSPKASPEQRATR. A helical transmembrane segment spans residues 265-285; it reads SILMLMSLFVLMSVFDSIVCS. Over 286–296 the chain is Extracellular; the sequence is SRTMYLNDPIS. Residues 297–317 traverse the membrane as a helical segment; it reads YSIQLFMVHIYATVSPFVFIV. The Cytoplasmic segment spans residues 318–339; sequence TEKHIVNFLRSVCEGDECLNIH.

Belongs to the G-protein coupled receptor 1 family.

Its subcellular location is the cell membrane. Functionally, putative pheromone receptor implicated in the regulation of social as well as reproductive behavior. The chain is Vomeronasal type-1 receptor A14 from Rattus norvegicus (Rat).